The primary structure comprises 175 residues: NADH dehydrogenase [ubiquinone] iron-sulfur protein 4, mitochondrial (175 aa).

Residues 1–42 constitute a mitochondrion transit peptide; sequence MAAVSMSVALRQALWGRRVATVAAVSVSKVSTRSLSTSTWRL. Residues 149-175 form a disordered region; it reads ERKVPKPKSKSYGANFSWNKRTRVSTK. Ser-173 bears the Phosphoserine mark.

It belongs to the complex I NDUFS4 subunit family. Mammalian complex I is composed of 45 different subunits. This is a component of the iron-sulfur (IP) fragment of the enzyme. Interacts with BCAP31 and TOMM40; the interaction mediates its translocation to the mitochondria; the interaction with BCAP31 is direct. Phosphorylated.

The protein resides in the mitochondrion inner membrane. Accessory subunit of the mitochondrial membrane respiratory chain NADH dehydrogenase (Complex I), that is believed not to be involved in catalysis. Complex I functions in the transfer of electrons from NADH to the respiratory chain. The immediate electron acceptor for the enzyme is believed to be ubiquinone. The protein is NADH dehydrogenase [ubiquinone] iron-sulfur protein 4, mitochondrial (NDUFS4) of Bos taurus (Bovine).